The chain runs to 500 residues: Anthranilate synthase component 1 (500 aa).

L-tryptophan-binding positions include Ser-49 and 276 to 278; that span reads PFM. Chorismate is bound at residue 311–312; sequence GT. Mg(2+) is bound at residue Glu-338. Chorismate is bound by residues Tyr-426, Arg-446, 460 to 462, and Gly-462; that span reads GGG. A Mg(2+)-binding site is contributed by Glu-475.

It belongs to the anthranilate synthase component I family. Heterotetramer consisting of two non-identical subunits: a beta subunit (TrpG) and a large alpha subunit (TrpE). Mg(2+) is required as a cofactor.

The enzyme catalyses chorismate + L-glutamine = anthranilate + pyruvate + L-glutamate + H(+). Its pathway is amino-acid biosynthesis; L-tryptophan biosynthesis; L-tryptophan from chorismate: step 1/5. Its activity is regulated as follows. Feedback inhibited by tryptophan. Part of a heterotetrameric complex that catalyzes the two-step biosynthesis of anthranilate, an intermediate in the biosynthesis of L-tryptophan. In the first step, the glutamine-binding beta subunit (TrpG) of anthranilate synthase (AS) provides the glutamine amidotransferase activity which generates ammonia as a substrate that, along with chorismate, is used in the second step, catalyzed by the large alpha subunit of AS (TrpE) to produce anthranilate. In the absence of TrpG, TrpE can synthesize anthranilate directly from chorismate and high concentrations of ammonia. This Cereibacter sphaeroides (strain ATCC 17023 / DSM 158 / JCM 6121 / CCUG 31486 / LMG 2827 / NBRC 12203 / NCIMB 8253 / ATH 2.4.1.) (Rhodobacter sphaeroides) protein is Anthranilate synthase component 1 (trpE).